A 448-amino-acid polypeptide reads, in one-letter code: MTATASPSDTKGAAAPRISFVSLGCPKALVDSERILTHLRAEGYELSRRHDGADVVIVNTCGFLDSAKAESLQAIGEAMAENGRVIVTGCMGAQPEEIREKYPNLLAVTGPQAYESVVAAVHEAVPPAHDPFLDLIPPQGVKLTPRHYAYLKISEGCNNRCTFCIIPSLRGDLVSRPAGDVLREAEKLVKAGVKELLVVSQDTSAYGIDTRYATSPWRDREVRARFYDLASELGELGAWVRLHYVYPYPHVDEVIPLMAEGKILPYLDMPLQHASPSVLKRMRRPGNQERQLDRIRRWREICPELAIRSTFIVGFPGETEAEFEELLDWIREARLERVGCFEYEPVKGAPANDLGLLVPPEVKAERKRRFMEAQAGVSLKLQRAKVGKRLQVIIDEAGPGGARGRSKADAPEIDGSVHVASRRPLRPGDIVTVKIERADAYDLHGIAV.

Residues 16–126 (PRISFVSLGC…VVAAVHEAVP (111 aa)) enclose the MTTase N-terminal domain. Positions 25, 61, 90, 157, 161, and 164 each coordinate [4Fe-4S] cluster. Residues 143–380 (LTPRHYAYLK…MEAQAGVSLK (238 aa)) form the Radical SAM core domain. The 66-residue stretch at 383 to 448 (RAKVGKRLQV…DAYDLHGIAV (66 aa)) folds into the TRAM domain.

Belongs to the methylthiotransferase family. RimO subfamily. It depends on [4Fe-4S] cluster as a cofactor.

It is found in the cytoplasm. It carries out the reaction L-aspartate(89)-[ribosomal protein uS12]-hydrogen + (sulfur carrier)-SH + AH2 + 2 S-adenosyl-L-methionine = 3-methylsulfanyl-L-aspartate(89)-[ribosomal protein uS12]-hydrogen + (sulfur carrier)-H + 5'-deoxyadenosine + L-methionine + A + S-adenosyl-L-homocysteine + 2 H(+). Catalyzes the methylthiolation of an aspartic acid residue of ribosomal protein uS12. This is Ribosomal protein uS12 methylthiotransferase RimO from Methylorubrum populi (strain ATCC BAA-705 / NCIMB 13946 / BJ001) (Methylobacterium populi).